The following is a 178-amino-acid chain: Adenine phosphoribosyltransferase (178 aa).

It belongs to the purine/pyrimidine phosphoribosyltransferase family. In terms of assembly, homodimer.

The protein resides in the cytoplasm. The catalysed reaction is AMP + diphosphate = 5-phospho-alpha-D-ribose 1-diphosphate + adenine. It participates in purine metabolism; AMP biosynthesis via salvage pathway; AMP from adenine: step 1/1. Catalyzes a salvage reaction resulting in the formation of AMP, that is energically less costly than de novo synthesis. The polypeptide is Adenine phosphoribosyltransferase (Bacteroides fragilis (strain ATCC 25285 / DSM 2151 / CCUG 4856 / JCM 11019 / LMG 10263 / NCTC 9343 / Onslow / VPI 2553 / EN-2)).